A 68-amino-acid chain; its full sequence is Neuronal regeneration-related protein (68 aa).

Residues 21 to 54 (MEGRLPKGRLPVPKEVNRKKNDETNAASLTPLGS) are disordered. The span at 44–54 (TNAASLTPLGS) shows a compositional bias: polar residues.

Interacts with the latency-associated peptides (LAP) of TGFB1 and TGFB2; the interaction results in a decrease in TGFB autoinduction. Interacts with FLNA. Post-translationally, phosphorylated on Ser-59. Phosphorylation decreases stability and activity.

The protein localises to the cytoplasm. Its function is as follows. May have roles in neural function and cellular differentiation. Ectopic expression promotes axonal regeneration, induces differentiation of fibroblast into myofibroblast, induces myofibroblast ameboid migration, augments motility of gliomas, and increases retinoic-acid regulation of lipid-droplet biogenesis. Down-regulates the expression of TGFB1 and TGFB2 but not of TGFB3. May play a role in the regulation of alveolar generation. The protein is Neuronal regeneration-related protein (NREP) of Macaca fascicularis (Crab-eating macaque).